Consider the following 371-residue polypeptide: Cytochrome b (371 aa).

4 consecutive transmembrane segments (helical) span residues 25–45 (FGSM…FLAV), 69–90 (WMMQ…YIHI), 105–125 (WLSG…XXXX), and 170–190 (XXXX…LHIM). H75 and H89 together coordinate heme b. Residues X174 and H188 each coordinate heme b. H193 contacts a ubiquinone. The next 4 membrane-spanning stretches (helical) occupy residues 218 to 238 (YKDL…VSFL), 280 to 300 (LGGA…PFTH), 312 to 332 (IMQL…WAAT), and 339 to 358 (FTMI…ITNP).

Belongs to the cytochrome b family. As to quaternary structure, the cytochrome bc1 complex contains 3 respiratory subunits (MT-CYB, CYC1 and UQCRFS1), 2 core proteins (UQCRC1 and UQCRC2) and probably 6 low-molecular weight proteins. Requires heme b as cofactor.

It is found in the mitochondrion inner membrane. In terms of biological role, component of the ubiquinol-cytochrome c reductase complex (complex III or cytochrome b-c1 complex) that is part of the mitochondrial respiratory chain. The b-c1 complex mediates electron transfer from ubiquinol to cytochrome c. Contributes to the generation of a proton gradient across the mitochondrial membrane that is then used for ATP synthesis. The polypeptide is Cytochrome b (MT-CYB) (Eryx jaculus (Javelin sand boa)).